The primary structure comprises 1090 residues: Pullulanase (1090 aa).

Positions 1-19 (MLRYTRNALVLGSLVLLSG) are cleaved as a signal peptide. Cysteine 20 carries the N-palmitoyl cysteine lipid modification. A lipid anchor (S-diacylglycerol cysteine) is attached at cysteine 20. The active-site Nucleophile is aspartate 684. The active-site Proton donor is glutamate 713.

This sequence belongs to the glycosyl hydrolase 13 family. As to quaternary structure, homotrimer.

Its subcellular location is the cell membrane. It catalyses the reaction Hydrolysis of (1-&gt;6)-alpha-D-glucosidic linkages in pullulan, amylopectin and glycogen, and in the alpha- and beta-limit dextrins of amylopectin and glycogen.. This Klebsiella pneumoniae protein is Pullulanase (pulA).